Reading from the N-terminus, the 385-residue chain is MKLERKVYIAGVGETKFGRHEVDFDVLGRAAALEALKASNIDRPTMVQSAYVGNGTNGMVTGQTVLKDLGMCGHLPIINVESACSAGGMAIHLAVRDVALGLADVAIGIGCENHTLHMAQGTAFATAMSDIETVHGAVMTGKYAMRAQRYMYETGATAEDLAMITVKNRRHATNNPYAWFKGEISIEEVVNSRVVASPLTLQQCCGIADGAGAVVVCSEEMVKKLGIKKPIRVAGSVVRSGPYHNRPRDITGDDITEETAHQLYEESGIGPEDVNIVELHDAFTIAELLYYECLGLCPKGEGLKFLRDGNATHGGKCVVSPRGGMLSYGHPIGASGAAQIAASVKQMRNQCPGYQVEPVPRVAMTHVTGGGCRARNTRHARCTCW.

CoA is bound at residue Arg19. Cys84 serves as the catalytic Acyl-thioester intermediate. The CoA site is built by Gly121, Arg193, Cys204, and Cys205.

This sequence belongs to the thiolase-like superfamily. Thiolase family. As to quaternary structure, heterotetramer composed of two BbsA subunits and two BbsB subunits. BbsB forms homodimeric subcomplexes. Both BbsA and BbsB are essential for enzymatic activity.

The enzyme catalyses (S)-2-benzoylsuccinyl-CoA + CoA = benzoyl-CoA + succinyl-CoA. Its pathway is xenobiotic degradation; toluene degradation. Its function is as follows. Component of the BbsAB thiolase complex, which catalyzes the thiolytic cleavage of (S)-2-benzoylsuccinyl-CoA to succinyl-CoA and benzoyl-CoA, the final step of anaerobic toluene metabolism. The polypeptide is Benzoylsuccinyl-CoA thiolase subunit BbsB (Thauera aromatica).